The sequence spans 263 residues: Acyl-[acyl-carrier-protein]--UDP-N-acetylglucosamine O-acyltransferase (263 aa).

It belongs to the transferase hexapeptide repeat family. LpxA subfamily. In terms of assembly, homotrimer.

Its subcellular location is the cytoplasm. The catalysed reaction is a (3R)-hydroxyacyl-[ACP] + UDP-N-acetyl-alpha-D-glucosamine = a UDP-3-O-[(3R)-3-hydroxyacyl]-N-acetyl-alpha-D-glucosamine + holo-[ACP]. It participates in glycolipid biosynthesis; lipid IV(A) biosynthesis; lipid IV(A) from (3R)-3-hydroxytetradecanoyl-[acyl-carrier-protein] and UDP-N-acetyl-alpha-D-glucosamine: step 1/6. Functionally, involved in the biosynthesis of lipid A, a phosphorylated glycolipid that anchors the lipopolysaccharide to the outer membrane of the cell. The chain is Acyl-[acyl-carrier-protein]--UDP-N-acetylglucosamine O-acyltransferase from Campylobacter lari (strain RM2100 / D67 / ATCC BAA-1060).